Consider the following 440-residue polypeptide: Thymidine phosphorylase (440 aa).

It belongs to the thymidine/pyrimidine-nucleoside phosphorylase family. In terms of assembly, homodimer.

It carries out the reaction thymidine + phosphate = 2-deoxy-alpha-D-ribose 1-phosphate + thymine. Its pathway is pyrimidine metabolism; dTMP biosynthesis via salvage pathway; dTMP from thymine: step 1/2. Functionally, the enzymes which catalyze the reversible phosphorolysis of pyrimidine nucleosides are involved in the degradation of these compounds and in their utilization as carbon and energy sources, or in the rescue of pyrimidine bases for nucleotide synthesis. This chain is Thymidine phosphorylase, found in Burkholderia pseudomallei (strain 1106a).